We begin with the raw amino-acid sequence, 84 residues long: Elongation factor 1-beta (84 aa).

Belongs to the EF-1-beta/EF-1-delta family.

Its function is as follows. Promotes the exchange of GDP for GTP in EF-1-alpha/GDP, thus allowing the regeneration of EF-1-alpha/GTP that could then be used to form the ternary complex EF-1-alpha/GTP/AAtRNA. This Methanoculleus marisnigri (strain ATCC 35101 / DSM 1498 / JR1) protein is Elongation factor 1-beta.